Reading from the N-terminus, the 1162-residue chain is Reticulon-4 (1162 aa).

An N-acetylmethionine modification is found at Met-1. A disordered region spans residues Met-1–Ile-183. Residues Met-1 to Gly-988 lie on the Cytoplasmic side of the membrane. Residues Ser-7 and Ser-16 each carry the phosphoserine modification. A compositionally biased stretch (low complexity) spans Ser-7–Ser-16. A compositionally biased stretch (acidic residues) spans Glu-31 to Glu-54. Residues Pro-85–Ala-99 are compositionally biased toward pro residues. Position 105 is a phosphoserine (Ser-105). Residues Ser-109–Lys-127 are compositionally biased toward low complexity. A phosphoserine mark is found at Ser-145, Ser-165, Ser-167, Ser-329, and Ser-344. Residue Thr-348 is modified to Phosphothreonine. Over residues Ser-408–Asn-422 the composition is skewed to basic and acidic residues. The interval Ser-408 to Glu-432 is disordered. Residue Ser-426 is modified to Phosphoserine. Thr-430 bears the Phosphothreonine mark. Phosphoserine occurs at positions 489, 690, 727, 768, and 832. A disordered region spans residues Glu-711–Ser-730. Over residues Val-713–Ser-730 the composition is skewed to acidic residues. Thr-834 carries the post-translational modification Phosphothreonine. Residues Ser-857 and Ser-961 each carry the phosphoserine modification. Positions Val-975–Glu-1162 constitute a Reticulon domain. The helical transmembrane segment at Val-989–Val-1009 threads the bilayer. Residues Thr-1010–Arg-1078 are Lumenal-facing. N6-acetyllysine is present on Lys-1074. A helical membrane pass occupies residues Leu-1079 to Thr-1099. At Tyr-1100–Glu-1162 the chain is on the cytoplasmic side.

Binds to RTN4R. Interacts with ATL1. Interacts with TMEM170A. Interacts with RTN4IP1. In terms of assembly, interacts in trans with CNTNAP1. Interacts with REEP5. Interacts with GPR50. Interacts with synaptic plasticity regulator PANTS; the interaction results in enhanced RTN4-mediated inhibition of AMPA receptor clustering. As to quaternary structure, homodimer. Interacts with BAD/Bcl-xl and BCL2. Interact with RTN3. Interacts with NGBR. Interacts with SPTLC1. Interacts with GRAMD4. Interacts with CDH5. Interacts with BACE1 and BACE2. Interacts with REEP5. Interacts with RETREG3. Interacts with BACE1 and BACE2. Interacts with TMEM33. As to expression, expressed in cardiomyocytes (at protein level). Highly expressed in brain but not deteceted in aorta, femoral and carotid arteries. Main isoform expressed in neurons. In terms of tissue distribution, expressed in cardiomyocytes (at protein level). Expressed in splenocytes, T-cells, B-cells, bone marrow derived dendritic cells and macrophages (at protein level). Expressed in neurons. Highly expressed in endothelial cells and vascular smooth muscle cells, including blood vessels and mesenteric arteries. Expressed in bronchial and alveolar epithelial cells as well as vascular endothelial cells of lungs. Expressed in B-cells, bone marrow dendritic cells and macrophages (at protein level). As to expression, expressed in cardiomyocytes. In terms of tissue distribution, expressed at very low levels in neurons.

It localises to the endoplasmic reticulum membrane. Its subcellular location is the cell membrane. It is found in the synapse. The protein localises to the cell junction. Its function is as follows. Required to induce the formation and stabilization of endoplasmic reticulum (ER) tubules. They regulate membrane morphogenesis in the ER by promoting tubular ER production. They influence nuclear envelope expansion, nuclear pore complex formation and proper localization of inner nuclear membrane proteins. However each isoform have specific functions mainly depending on their tissue expression specificities. Developmental neurite growth regulatory factor with a role as a negative regulator of axon-axon adhesion and growth, and as a facilitator of neurite branching. Regulates neurite fasciculation, branching and extension in the developing nervous system. Involved in down-regulation of growth, stabilization of wiring and restriction of plasticity in the adult CNS. Regulates the radial migration of cortical neurons via an RTN4R-LINGO1 containing receptor complex. Acts as a negative regulator of central nervous system angiogenesis. Inhibits spreading, migration and sprouting of primary brain microvascular endothelial cells (MVECs). Also induces the retraction of MVECs lamellipodia and filopodia in a ROCK pathway-dependent manner. Functionally, mainly function in endothelial cells and vascular smooth muscle cells, is also involved in immune system regulation. Modulator of vascular remodeling, promotes the migration of endothelial cells but inhibits the migration of vascular smooth muscle cells. Regulates endothelial sphingolipid biosynthesis with direct effects on vascular function and blood pressure. Inhibits serine palmitoyltransferase, SPTLC1, the rate-limiting enzyme of the novo sphingolipid biosynthetic pathway, thereby controlling production of endothelial sphingosine-1-phosphate (S1P). Required to promote macrophage homing and functions such as cytokine/chemokine gene expression involved in angiogenesis, arteriogenesis and tissue repair. Mediates ICAM1 induced transendothelial migration of leukocytes such as monocytes and neutrophils and acute inflammation. Necessary for immune responses triggered by nucleic acid sensing TLRs, such as TLR9, is required for proper TLR9 location to endolysosomes. Also involved in immune response to LPS. Plays a role in liver regeneration through the modulation of hepatocytes proliferation. Reduces the anti-apoptotic activity of Bcl-xl and Bcl-2. This is likely consecutive to their change in subcellular location, from the mitochondria to the endoplasmic reticulum, after binding and sequestration. With isoform C, inhibits BACE1 activity and amyloid precursor protein processing. In terms of biological role, regulates cardiomyocyte apoptosis upon hypoxic conditions. With isoform B, inhibits BACE1 activity and amyloid precursor protein processing. This chain is Reticulon-4, found in Mus musculus (Mouse).